Consider the following 497-residue polypeptide: Probable D-lactate dehydrogenase, mitochondrial (497 aa).

Positions 65-246 (HRCRPPDVVV…TKATLRLYGV (182 aa)) constitute an FAD-binding PCMH-type domain.

Belongs to the FAD-binding oxidoreductase/transferase type 4 family. The cofactor is FAD.

The protein localises to the mitochondrion. The enzyme catalyses (R)-lactate + 2 Fe(III)-[cytochrome c] = 2 Fe(II)-[cytochrome c] + pyruvate + 2 H(+). Functionally, involved in D-lactate, but not L-lactate catabolic process. The protein is Probable D-lactate dehydrogenase, mitochondrial (ldhd) of Danio rerio (Zebrafish).